The chain runs to 101 residues: Protein Tat (101 aa).

The segment at 1–20 is disordered; that stretch reads MDPVDPNIEPWNQPGSQPKT. The segment at 1–24 is interaction with human CREBBP; that stretch reads MDPVDPNIEPWNQPGSQPKTACNQ. Residues 1 to 48 form a transactivation region; it reads MDPVDPNIEPWNQPGSQPKTACNQCYCKRCCYHCQICFLKKGLGISNG. Residues Cys22, Cys25, and Cys27 each coordinate Zn(2+). The tract at residues 22 to 37 is cysteine-rich; the sequence is CNQCYCKRCCYHCQIC. Lys28 carries the post-translational modification N6-acetyllysine; by host PCAF. 4 residues coordinate Zn(2+): Cys30, His33, Cys34, and Cys37. Residues 38–48 are core; it reads FLKKGLGISNG. The tract at residues 45-101 is disordered; the sequence is ISNGRKKRRPRRTTPYNSENHQDPLRKQPLSQPRGEQTDPKESKKKVESKTKTDQFD. Positions 49–57 match the Nuclear localization signal, RNA-binding (TAR), and protein transduction motif; the sequence is RKKRRPRRT. The segment at 49–86 is interaction with the host capping enzyme RNGTT; that stretch reads RKKRRPRRTTPYNSENHQDPLRKQPLSQPRGEQTDPKE. N6-acetyllysine; by host EP300 and GCN5L2 is present on residues Lys50 and Lys51. Residues Arg52 and Arg53 each carry the asymmetric dimethylarginine; by host PRMT6 modification. A Glycyl lysine isopeptide (Lys-Gly) (interchain with G-Cter in ubiquitin) cross-link involves residue Lys71. Residues 80–101 show a composition bias toward basic and acidic residues; that stretch reads EQTDPKESKKKVESKTKTDQFD.

The protein belongs to the lentiviruses Tat family. As to quaternary structure, interacts with host CCNT1. Associates with the P-TEFb complex composed at least of Tat, P-TEFb (CDK9 and CCNT1), TAR RNA, RNA Pol II. Recruits the HATs CREBBP, TAF1/TFIID, EP300, PCAF and GCN5L2. Interacts with host KAT5/Tip60; this interaction targets the latter to degradation. Interacts with the host deacetylase SIRT1. Interacts with host capping enzyme RNGTT; this interaction stimulates RNGTT. Binds to host KDR, and to the host integrins ITGAV/ITGB3 and ITGA5/ITGB1. Interacts with host KPNB1/importin beta-1 without previous binding to KPNA1/importin alpha-1. Interacts with EIF2AK2. Interacts with host nucleosome assembly protein NAP1L1; this interaction may be required for the transport of Tat within the nucleus, since the two proteins interact at the nuclear rim. Interacts with host C1QBP/SF2P32; this interaction involves lysine-acetylated Tat. Interacts with the host chemokine receptors CCR2, CCR3 and CXCR4. Interacts with host DPP4/CD26; this interaction may trigger an anti-proliferative effect. Interacts with host LDLR. Interacts with the host extracellular matrix metalloproteinase MMP1. Interacts with host PRMT6; this interaction mediates Tat's methylation. Interacts with, and is ubiquitinated by MDM2/Hdm2. Interacts with host PSMC3 and HTATIP2. Interacts with STAB1; this interaction may overcome SATB1-mediated repression of IL2 and IL2RA (interleukin) in T cells by binding to the same domain than HDAC1. Interacts (when acetylated) with human CDK13, thereby increasing HIV-1 mRNA splicing and promoting the production of the doubly spliced HIV-1 protein Nef. Interacts with host TBP; this interaction modulates the activity of transcriptional pre-initiation complex. Interacts with host RELA. Interacts with host PLSCR1; this interaction negatively regulates Tat transactivation activity by altering its subcellular distribution. In terms of processing, asymmetrical arginine methylation by host PRMT6 seems to diminish the transactivation capacity of Tat and affects the interaction with host CCNT1. Acetylation by EP300, CREBBP, GCN5L2/GCN5 and PCAF regulates the transactivation activity of Tat. EP300-mediated acetylation of Lys-50 promotes dissociation of Tat from the TAR RNA through the competitive binding to PCAF's bromodomain. In addition, the non-acetylated Tat's N-terminus can also interact with PCAF. PCAF-mediated acetylation of Lys-28 enhances Tat's binding to CCNT1. Lys-50 is deacetylated by SIRT1. Post-translationally, polyubiquitination by host MDM2 does not target Tat to degradation, but activates its transactivation function and fosters interaction with CCNT1 and TAR RNA. In terms of processing, phosphorylated by EIF2AK2 on serine and threonine residues adjacent to the basic region important for TAR RNA binding and function. Phosphorylation of Tat by EIF2AK2 is dependent on the prior activation of EIF2AK2 by dsRNA.

The protein localises to the host nucleus. It localises to the host nucleolus. The protein resides in the host cytoplasm. Its subcellular location is the secreted. Functionally, transcriptional activator that increases RNA Pol II processivity, thereby increasing the level of full-length viral transcripts. Recognizes a hairpin structure at the 5'-LTR of the nascent viral mRNAs referred to as the transactivation responsive RNA element (TAR) and recruits the cyclin T1-CDK9 complex (P-TEFb complex) that will in turn hyperphosphorylate the RNA polymerase II to allow efficient elongation. The CDK9 component of P-TEFb and other Tat-activated kinases hyperphosphorylate the C-terminus of RNA Pol II that becomes stabilized and much more processive. Other factors such as HTATSF1/Tat-SF1, SUPT5H/SPT5, and HTATIP2 are also important for Tat's function. Besides its effect on RNA Pol II processivity, Tat induces chromatin remodeling of proviral genes by recruiting the histone acetyltransferases (HATs) CREBBP, EP300 and PCAF to the chromatin. This also contributes to the increase in proviral transcription rate, especially when the provirus integrates in transcriptionally silent region of the host genome. To ensure maximal activation of the LTR, Tat mediates nuclear translocation of NF-kappa-B by interacting with host RELA. Through its interaction with host TBP, Tat may also modulate transcription initiation. Tat can reactivate a latently infected cell by penetrating in it and transactivating its LTR promoter. In the cytoplasm, Tat is thought to act as a translational activator of HIV-1 mRNAs. In terms of biological role, extracellular circulating Tat can be endocytosed by surrounding uninfected cells via the binding to several surface receptors such as CD26, CXCR4, heparan sulfate proteoglycans (HSPG) or LDLR. Neurons are rarely infected, but they internalize Tat via their LDLR. Through its interaction with nuclear HATs, Tat is potentially able to control the acetylation-dependent cellular gene expression. Modulates the expression of many cellular genes involved in cell survival, proliferation or in coding for cytokines or cytokine receptors. Tat plays a role in T-cell and neurons apoptosis. Tat induced neurotoxicity and apoptosis probably contribute to neuroAIDS. Circulating Tat also acts as a chemokine-like and/or growth factor-like molecule that binds to specific receptors on the surface of the cells, affecting many cellular pathways. In the vascular system, Tat binds to ITGAV/ITGB3 and ITGA5/ITGB1 integrins dimers at the surface of endothelial cells and competes with bFGF for heparin-binding sites, leading to an excess of soluble bFGF. The chain is Protein Tat from Homo sapiens (Human).